A 764-amino-acid polypeptide reads, in one-letter code: Aconitate hydratase (764 aa).

75-77 (DSH) contributes to the substrate binding site. Positions 307, 372, and 375 each coordinate [4Fe-4S] cluster. Substrate is bound by residues Arg-405, Arg-410, Arg-568, and 648 to 649 (SR).

It belongs to the aconitase/IPM isomerase family. [4Fe-4S] cluster is required as a cofactor.

The protein resides in the cytoplasm. The catalysed reaction is citrate = D-threo-isocitrate. It participates in carbohydrate metabolism; glyoxylate and dicarboxylate metabolism. Its function is as follows. Catalyzes the isomerization of citrate to isocitrate via cis-aconitate. This Cucumis melo var. conomon (Oriental pickling melon) protein is Aconitate hydratase (ACO).